An 84-amino-acid chain; its full sequence is UPF0248 protein Pisl_1919 (84 aa).

It belongs to the UPF0248 family.

The sequence is that of UPF0248 protein Pisl_1919 from Pyrobaculum islandicum (strain DSM 4184 / JCM 9189 / GEO3).